The primary structure comprises 142 residues: Hemoglobin subunit alpha-1 (142 aa).

Ser1 carries the post-translational modification N-acetylserine. The region spanning 1–142 is the Globin domain; the sequence is SLSVKDKAAV…VALALAERYR (142 aa). His59 contributes to the O2 binding site. Position 88 (His88) interacts with heme b.

This sequence belongs to the globin family. Hb 1 is a heterotetramer of two alpha-1 and two beta-1 chains. Red blood cells.

In terms of biological role, involved in oxygen transport from gills to the various peripheral tissues. The chain is Hemoglobin subunit alpha-1 (hba1) from Gobionotothen gibberifrons (Humped rockcod).